The sequence spans 354 residues: Uroporphyrinogen decarboxylase (354 aa).

Residues 30-34, aspartate 79, tyrosine 154, serine 209, and histidine 333 contribute to the substrate site; that span reads RQAGR.

It belongs to the uroporphyrinogen decarboxylase family. In terms of assembly, homodimer.

Its subcellular location is the cytoplasm. It catalyses the reaction uroporphyrinogen III + 4 H(+) = coproporphyrinogen III + 4 CO2. Its pathway is porphyrin-containing compound metabolism; protoporphyrin-IX biosynthesis; coproporphyrinogen-III from 5-aminolevulinate: step 4/4. Catalyzes the decarboxylation of four acetate groups of uroporphyrinogen-III to yield coproporphyrinogen-III. The chain is Uroporphyrinogen decarboxylase from Mycobacterium sp. (strain JLS).